We begin with the raw amino-acid sequence, 283 residues long: tRNA pseudouridine synthase A (283 aa).

The active-site Nucleophile is Asp-73. The tract at residues 120–124 (FHARF) is RNA binding. Residue Tyr-131 coordinates substrate. The interaction with tRNA stretch occupies residues 181–185 (QCQSR).

This sequence belongs to the tRNA pseudouridine synthase TruA family. Homodimer.

The enzyme catalyses uridine(38/39/40) in tRNA = pseudouridine(38/39/40) in tRNA. In terms of biological role, formation of pseudouridine at positions 38, 39 and 40 in the anticodon stem and loop of transfer RNAs. This Pectobacterium atrosepticum (strain SCRI 1043 / ATCC BAA-672) (Erwinia carotovora subsp. atroseptica) protein is tRNA pseudouridine synthase A.